The following is a 289-amino-acid chain: MRHPDFPSAVAVPPAWQASLRLRFAARGERTVLAARQHRGPLMVQKPLYPEGDICHAVILHPPAGVAGGDTLDIALHAEAGTHAVIATPGATKWYKSLGRDASQHVRLTVEEGARLDWLPQENIVFDDARARIATELSIAPGGSAIGWDAVVLGRQASGEQWNRGVLWLDTQVRCNGHALWIEQSQLDAGSPLRGAVAGLDGMSVLGTLWAVGHGATQELAESLAERLPYAAGLRAGVTCLSSPAQSMLLVRVLGRQMEAVRHVMVDAWSALREPIHGVPARPLRLWAT.

This sequence belongs to the UreD family. As to quaternary structure, ureD, UreF and UreG form a complex that acts as a GTP-hydrolysis-dependent molecular chaperone, activating the urease apoprotein by helping to assemble the nickel containing metallocenter of UreC. The UreE protein probably delivers the nickel.

It localises to the cytoplasm. Its function is as follows. Required for maturation of urease via the functional incorporation of the urease nickel metallocenter. This is Urease accessory protein UreD from Cupriavidus pinatubonensis (strain JMP 134 / LMG 1197) (Cupriavidus necator (strain JMP 134)).